Here is a 651-residue protein sequence, read N- to C-terminus: Endoplasmic reticulum chaperone BiP (651 aa).

The signal sequence occupies residues 1-20 (MGLSTYVGIFLLCILTLSRC). ATP-binding positions include 36–39 (GTTY), lysine 96, 226–228 (GGT), 292–299 (EKAKRTLS), and 363–366 (GSTR). A nucleotide-binding (NBD) region spans residues 125-279 (KPYMKVQVGS…KKKEGKDITK (155 aa)). The interval 399–499 (VQAGVISGVE…PRGLPQIEVT (101 aa)) is substrate-binding (SBD). The short motif at 648–651 (KEEL) is the Prevents secretion from ER element.

Belongs to the heat shock protein 70 family.

Its subcellular location is the endoplasmic reticulum lumen. It catalyses the reaction ATP + H2O = ADP + phosphate + H(+). Its activity is regulated as follows. The chaperone activity is regulated by ATP-induced allosteric coupling of the nucleotide-binding (NBD) and substrate-binding (SBD) domains. In the ADP-bound and nucleotide-free (apo) states, the two domains have little interaction. In contrast, in the ATP-bound state the two domains are tightly coupled, which results in drastically accelerated kinetics in both binding and release of polypeptide substrates. J domain-containing co-chaperones stimulate the ATPase activity and are required for efficient substrate recognition. In terms of biological role, endoplasmic reticulum chaperone that plays a key role in protein folding and quality control in the endoplasmic reticulum lumen. Involved in the correct folding of proteins and degradation of misfolded proteins. Acts as a key repressor of the unfolded protein response (UPR). The sequence is that of Endoplasmic reticulum chaperone BiP from Echinococcus granulosus (Hydatid tapeworm).